We begin with the raw amino-acid sequence, 656 residues long: Replication protein A 70 kDa DNA-binding subunit A (656 aa).

Residues 225–307 (AIKARVTAKG…NHLNNEWEIL (83 aa)) constitute a DNA-binding region (OB). The C4-type zinc-finger motif lies at 516-542 (CPNMIGDRQCNKKVTKSTNGNWTCDKC).

The protein belongs to the replication factor A protein 1 family. In terms of assembly, heterotrimer of RPA1, RPA2 and RPA3 (canonical replication protein A complex). Interacts with RPA2B. Expressed in root tips, roots, shoot apical meristem (SAM), young leaves, flag leaves and ears, and at lower levels in mature leaves.

The protein localises to the nucleus. Functionally, component of the replication protein A complex (RPA) required for DNA recombination, repair and replication. The activity of RPA is mediated by single-stranded DNA binding and protein interactions. Plays an essential role in meiotic and somatic DNA repair, but is dispensable for DNA replication and homologous recombination. Is essential for normal progression through meiosis in pollen mother cells. Is involved in repair of double-strand DNA breaks (DSBs) induced by genotoxic stresses. The protein is Replication protein A 70 kDa DNA-binding subunit A (RPA1A) of Oryza sativa subsp. japonica (Rice).